Consider the following 216-residue polypeptide: uncharacterized protein (216 aa).

The Cupin type-2 domain occupies 125 to 176 (YPKSTNFDSHYHDCDEYWVIIEGAGTVVVGSRSFEVEVGDCVAIGMGHHHDL).

This is an uncharacterized protein from Sinorhizobium fredii (strain NBRC 101917 / NGR234).